Consider the following 394-residue polypeptide: MGAAFKWGAAARKTVFPLFYFLIFFAFGALFPLLSVYLQEEARLSGAAIGWIMSLPPIVTMAAQPLWGTAADYTRKPVGLLLAALVLAALFGVMYALAGSYRLFVVLTVLLSAMQSAIVPLSDSLALRHVHEQGGNYGAIRLWGSLGFAMAVLAVGWLSDHIAFAVIFYAFSLALLTAAALATRLPRYPMGAPGALTRQDVRGLLASRPFRLLLVATFLLFGPILANNSYFGLLIHELGGTLTGIGLAFLFAAGSEAPFMKAADRLIGRFGMVRLLLLAALISAARWLAYAADPPLWFVYMTTVVQGCSVGLAIPTALQYARRLAPERVQSTAVALYSAVGNGLGAWFCTLVGGYLLERWQIGAVYLFFSICTIVGVLVLLLLAKRERTAGEEK.

The Cytoplasmic segment spans residues 1 to 11; the sequence is MGAAFKWGAAA. The chain crosses the membrane as a helical span at residues 12–38; it reads RKTVFPLFYFLIFFAFGALFPLLSVYL. Topologically, residues 39 to 45 are extracellular; sequence QEEARLS. The chain crosses the membrane as a helical span at residues 46–74; the sequence is GAAIGWIMSLPPIVTMAAQPLWGTAADYT. At 75–78 the chain is on the cytoplasmic side; that stretch reads RKPV. Residues 79-104 form a helical membrane-spanning segment; sequence GLLLAALVLAALFGVMYALAGSYRLF. Over 105–108 the chain is Extracellular; it reads VVLT. A helical membrane pass occupies residues 109-126; sequence VLLSAMQSAIVPLSDSLA. Residues 127-137 are Cytoplasmic-facing; sequence LRHVHEQGGNY. The chain crosses the membrane as a helical span at residues 138 to 160; the sequence is GAIRLWGSLGFAMAVLAVGWLSD. Topologically, residues 161 to 163 are extracellular; that stretch reads HIA. A helical transmembrane segment spans residues 164-183; that stretch reads FAVIFYAFSLALLTAAALAT. Residues 184 to 213 lie on the Cytoplasmic side of the membrane; that stretch reads RLPRYPMGAPGALTRQDVRGLLASRPFRLL. The chain crosses the membrane as a helical span at residues 214–233; sequence LVATFLLFGPILANNSYFGL. Over 234–237 the chain is Extracellular; it reads LIHE. Residues 238-262 traverse the membrane as a helical segment; that stretch reads LGGTLTGIGLAFLFAAGSEAPFMKA. At 263–272 the chain is on the cytoplasmic side; that stretch reads ADRLIGRFGM. Residues 273-292 form a helical membrane-spanning segment; sequence VRLLLLAALISAARWLAYAA. Residues 293-295 are Extracellular-facing; the sequence is DPP. A helical transmembrane segment spans residues 296–318; the sequence is LWFVYMTTVVQGCSVGLAIPTAL. The Cytoplasmic portion of the chain corresponds to 319 to 330; that stretch reads QYARRLAPERVQ. The helical transmembrane segment at 331 to 358 threads the bilayer; that stretch reads STAVALYSAVGNGLGAWFCTLVGGYLLE. Residues 359–361 are Extracellular-facing; sequence RWQ. Residues 362–382 form a helical membrane-spanning segment; it reads IGAVYLFFSICTIVGVLVLLL. At 383–394 the chain is on the cytoplasmic side; sequence LAKRERTAGEEK.

The protein belongs to the major facilitator superfamily.

The protein localises to the cell membrane. Functionally, high affinity transport of maltose. This Geobacillus stearothermophilus (Bacillus stearothermophilus) protein is Maltose permease (malA).